The sequence spans 119 residues: Phosphoribosyl-AMP cyclohydrolase (119 aa).

Aspartate 77 contacts Mg(2+). Position 78 (cysteine 78) interacts with Zn(2+). Mg(2+) contacts are provided by aspartate 79 and aspartate 81. Positions 94 and 101 each coordinate Zn(2+).

Belongs to the PRA-CH family. As to quaternary structure, homodimer. It depends on Mg(2+) as a cofactor. Zn(2+) serves as cofactor.

It localises to the cytoplasm. It carries out the reaction 1-(5-phospho-beta-D-ribosyl)-5'-AMP + H2O = 1-(5-phospho-beta-D-ribosyl)-5-[(5-phospho-beta-D-ribosylamino)methylideneamino]imidazole-4-carboxamide. The protein operates within amino-acid biosynthesis; L-histidine biosynthesis; L-histidine from 5-phospho-alpha-D-ribose 1-diphosphate: step 3/9. In terms of biological role, catalyzes the hydrolysis of the adenine ring of phosphoribosyl-AMP. The sequence is that of Phosphoribosyl-AMP cyclohydrolase from Cereibacter sphaeroides (strain KD131 / KCTC 12085) (Rhodobacter sphaeroides).